Here is an 849-residue protein sequence, read N- to C-terminus: MEEGSEAQPPLQPEAVSAEASEPPPPVPMDQDEGQAAAAEAMEGEAEGAAAAAGTIEGEAGYAAADADPMEDEAADEAGAAEPMEDDPPTSSAPSATAAVDDSTIARKRRRRKKQFPGMIPTAGVRVLRAAASAPSAAHLNGVPRRRGRPPTSSSLRLARELDAEALIALAAGFPADSLSEDEVAAAVLPRIGGVDQTNYLVVRNHVLALWRSNPLSPVASNAALASIRAEHAHLVAAAHSFLSDHAYINFGLAPSVISLPPCPPPSLPPPSVLIVGAGFAGLAAARHLMSLGFKVAIVEGRLRPGGRVFTKSMRSTAAEYPDIAAAADLGGSVLTGINGNPLGVIARQLGFPLHKVRDKCPLYLPDGRPVDPDMDARVEAAFNQLLDKVCQLRQVVADSIPHGVDVSLGMALEAFRAAHGVAAEREERMLLDWHLANLEYANAAPLVDLSMAFWDQDDPYEMGGDHCFIPGGNSRFVRALADGIPIFYGQNVRRIQYGCDGAMVYTDKQTFRGDMVLCTVPLGVLKKGNIQFVPELPAQKREAIERLGFGLLNKVVLLFPYDFWDGRIDTFGHLTEDSGQRGEFFLFYSYSSVSGGPLLIALVAGESAIEFEKTSPAENVEKVLETLRKIFSPKGIEVPKPLQAICTRWGTDKFTYGSYSYVAIGSSGDDYDILAESVCDRVFFAGEATNRRYPATMHGALLSGYREAANIVRAARRRAKKVDSPKKMDVNNEVKYEVKVDNIDLDDLFRTPDAAFGGFSVLHDPSTSEPDSISLLRVGIGARKLGSGSLFLYGLIMRKNVANLAAMEGDEQRLSTLYRDFGTKLVGLDGLGDSGSSLISRIKAAARK.

Residues 1-118 (MEEGSEAQPP…RRRRKKQFPG (118 aa)) are disordered. Low complexity-rich tracts occupy residues 34–67 (GQAA…AADA) and 89–103 (PTSS…VDDS). Residues 106-115 (ARKRRRRKKQ) are compositionally biased toward basic residues. An SWIRM domain is found at 159–260 (ARELDAEALI…FGLAPSVISL (102 aa)). The FAD site is built by Glu-300, Arg-302, Arg-308, and Glu-688.

The protein belongs to the flavin monoamine oxidase family. The cofactor is FAD.

Functionally, probable histone demethylase. In Oryza sativa subsp. japonica (Rice), this protein is Lysine-specific histone demethylase 1 homolog 1.